Here is a 166-residue protein sequence, read N- to C-terminus: MGLNLDDKKAVVAEVSAQVANAQTIAVAEYRGIAVGDLTGLRAKARESGVYLRVLKNTLVRRAIAETPFAGLSDQLVGPLIYGISEDPVAAAKVLNDFAKGNDKLVLKAGSYAGNTLDKAGVQALASIPSREELLARLLGVMQAPVTGFACTLAALAKKREEEVAA.

It belongs to the universal ribosomal protein uL10 family. As to quaternary structure, part of the ribosomal stalk of the 50S ribosomal subunit. The N-terminus interacts with L11 and the large rRNA to form the base of the stalk. The C-terminus forms an elongated spine to which L12 dimers bind in a sequential fashion forming a multimeric L10(L12)X complex.

Forms part of the ribosomal stalk, playing a central role in the interaction of the ribosome with GTP-bound translation factors. The sequence is that of Large ribosomal subunit protein uL10 from Aromatoleum aromaticum (strain DSM 19018 / LMG 30748 / EbN1) (Azoarcus sp. (strain EbN1)).